Here is a 241-residue protein sequence, read N- to C-terminus: F-box protein At3g22350 (241 aa).

The 44-residue stretch at 1 to 44 (MSDLPLDLVEEILSRVSATSLKRLRSTCKQWNTLFKKRSFSQKH) folds into the F-box domain.

In Arabidopsis thaliana (Mouse-ear cress), this protein is F-box protein At3g22350.